The sequence spans 135 residues: MTMTDPIADMLSRVRNASNAFHDSVTMPSSKLKAHIAEILKQEGYIEDFAVNDRKDGKAGKELEITLKYGPTRERALAGVRRVSKPGLRVYTKSTNLPKVLGGLGVAIISTSHGLLTDREASNKGVGGEVLAYVW.

The protein belongs to the universal ribosomal protein uS8 family. In terms of assembly, part of the 30S ribosomal subunit. Contacts proteins S5 and S12.

Its function is as follows. One of the primary rRNA binding proteins, it binds directly to 16S rRNA central domain where it helps coordinate assembly of the platform of the 30S subunit. In Corynebacterium urealyticum (strain ATCC 43042 / DSM 7109), this protein is Small ribosomal subunit protein uS8.